The primary structure comprises 109 residues: Oncomodulin (109 aa).

Position 2 is an N-acetylserine (Ser-2). EF-hand domains follow at residues 39–74 (MSAS…FQSD) and 78–109 (LTES…MVHS). Residues Asp-52, Asp-54, Ser-56, Tyr-58, Glu-63, Asp-91, Asp-93, Asp-95, Lys-97, and Glu-102 each coordinate Ca(2+).

This sequence belongs to the parvalbumin family. Found in tumor tissues and not detected in normal tissues.

Functionally, has some calmodulin-like activity with respect to enzyme activation and growth regulation. Binds two calcium ions. This chain is Oncomodulin (Ocm), found in Rattus norvegicus (Rat).